The sequence spans 395 residues: Fractalkine (395 aa).

An N-terminal signal peptide occupies residues Met-1–Gly-24. The segment at Gln-25 to Gly-100 is chemokine and involved in interaction with ITGAV:ITGB3 and ITGA4:ITGB1. Residues Gln-25 to Thr-336 are Extracellular-facing. 2 disulfides stabilise this stretch: Cys-32-Cys-58 and Cys-36-Cys-74. The segment at Gly-101 to Thr-336 is mucin-like stalk. 2 stretches are compositionally biased toward polar residues: residues Ala-148–Ala-172 and Ala-201–Trp-210. Disordered regions lie at residues Ala-148–Lys-180 and Ala-201–Gln-305. Over residues Ser-218 to Pro-236 the composition is skewed to low complexity. A helical transmembrane segment spans residues Arg-337 to Met-357. At Phe-358 to Val-395 the chain is on the cytoplasmic side.

Belongs to the intercrine delta family. In terms of assembly, monomer. Forms a ternary complex with CX3CR1 and ITGAV:ITGB3 or ITGA4:ITGB1. In terms of processing, a soluble short 80 kDa form may be released by proteolytic cleavage from the long membrane-anchored form. Highest levels in brain. Lower levels in kidney, heart and lung. Also found in skeletal muscle and testis. Highly expressed in lesional smooth muscle cells, but not macrophages. Low levels of ABCD-3 mRNA were also found in anti-CD40-stimulated splenic B-cells, but not in resting B-cells. Also expressed in dendritic cells.

The protein resides in the cell membrane. The protein localises to the secreted. Its function is as follows. Chemokine that acts as a ligand for both CX3CR1 and integrins ITGAV:ITGB3 and ITGA4:ITGB1. The CX3CR1-CX3CL1 signaling exerts distinct functions in different tissue compartments, such as immune response, inflammation, cell adhesion and chemotaxis. Regulates leukocyte adhesion and migration processes at the endothelium. Can activate integrins in both a CX3CR1-dependent and CX3CR1-independent manner. In the presence of CX3CR1, activates integrins by binding to the classical ligand-binding site (site 1) in integrins. In the absence of CX3CR1, binds to a second site (site 2) in integrins which is distinct from site 1 and enhances the binding of other integrin ligands to site 1. The soluble form is chemotactic for T-cells and monocytes, but not for neutrophils. In terms of biological role, the membrane-bound form promotes adhesion of those leukocytes to endothelial cells. This chain is Fractalkine, found in Mus musculus (Mouse).